A 294-amino-acid polypeptide reads, in one-letter code: Protein huluwa (294 aa).

At Met1–Ala23 the chain is on the extracellular side. Residues Leu24–Val44 form a helical membrane-spanning segment. Topologically, residues Gly45–Val294 are cytoplasmic. Residues Ser154–Pro175 form a disordered region. The VPPNSP motif signature appears at Val164–Pro169. The short motif at Ser184 to Thr190 is the SLRRSST motif element.

It belongs to the huluwa family. Interacts with axin1; leading to promote the tankyrase-mediated degradation of axin. Interacts with axin2; leading to promote the tankyrase-mediated degradation of axin.

It is found in the cell membrane. In terms of biological role, key maternal determinant of the dorsal organizer and body axis formation in vertebrates that acts by promoting stabilization of beta-catenin (ctnnb1). Localizes on the plasma membrane of the future dorsal blastomeres in early blastulas and binds to and promotes the tankyrase-mediated degradation of axin (axin1 and axin2). Axin degradation results in stabilization and nuclear translocation of beta-catenin (ctnnb1) for activating organizer-specific target gene expression. In Danio rerio (Zebrafish), this protein is Protein huluwa.